The primary structure comprises 72 residues: uncharacterized protein (72 aa).

This sequence belongs to the baculoviridae 8 kDa protein family.

This is an uncharacterized protein from Orgyia pseudotsugata (Douglas-fir tussock moth).